We begin with the raw amino-acid sequence, 311 residues long: Glycine--tRNA ligase alpha subunit (311 aa).

Belongs to the class-II aminoacyl-tRNA synthetase family. Tetramer of two alpha and two beta subunits.

Its subcellular location is the cytoplasm. The enzyme catalyses tRNA(Gly) + glycine + ATP = glycyl-tRNA(Gly) + AMP + diphosphate. The polypeptide is Glycine--tRNA ligase alpha subunit (Rhizobium meliloti (strain 1021) (Ensifer meliloti)).